We begin with the raw amino-acid sequence, 713 residues long: Low-density lipoprotein receptor-related protein 10 (713 aa).

The first 16 residues, Met1–Ala16, serve as a signal peptide directing secretion. Topologically, residues His17–Lys440 are extracellular. 2 disulfide bridges follow: Cys28–Cys57 and Cys80–Cys98. The CUB 1 domain occupies Cys28 to Asp136. N-linked (GlcNAc...) asparagine glycosylation is present at Asn56. Asn111 is a glycosylation site (N-linked (GlcNAc...) asparagine). In terms of domain architecture, LDL-receptor class A 1 spans Met139 to Ser175. Cystine bridges form between Cys140/Cys152, Cys147/Cys165, Cys159/Cys174, and Cys192/Cys220. One can recognise a CUB 2 domain in the interval Cys192–Arg305. N-linked (GlcNAc...) asparagine glycans are attached at residues Asn193 and Asn299. LDL-receptor class A domains are found at residues Tyr307 to Pro354, Gly355 to Arg397, and His398 to Ser434. 9 cysteine pairs are disulfide-bonded: Cys308-Cys331, Cys315-Cys344, Cys338-Cys353, Cys356-Cys374, Cys363-Cys387, Cys381-Cys396, Cys399-Cys411, Cys406-Cys424, and Cys418-Cys433. Residues Val441 to Gly461 form a helical membrane-spanning segment. The Cytoplasmic segment spans residues Cys462–Thr713. A disordered region spans residues Gly564 to Ala637. A compositionally biased stretch (polar residues) spans Thr569–Pro584. A Phosphothreonine modification is found at Thr596. Low complexity predominate over residues Pro621–Glu636.

This sequence belongs to the LDLR family. As to expression, expressed in blood leukocyte, lung, placenta, small intestine, liver, kidney, spleen, thymus, colon, skeletal muscle and heart.

The protein localises to the membrane. It localises to the coated pit. In terms of biological role, probable receptor, which is involved in the internalization of lipophilic molecules and/or signal transduction. May be involved in the uptake of lipoprotein APOE in liver. The chain is Low-density lipoprotein receptor-related protein 10 (LRP10) from Homo sapiens (Human).